Here is an 843-residue protein sequence, read N- to C-terminus: Beta-mannosidase B (843 aa).

The active-site Proton donor is the glutamate 432.

This sequence belongs to the glycosyl hydrolase 2 family. Beta-mannosidase B subfamily.

It carries out the reaction Hydrolysis of terminal, non-reducing beta-D-mannose residues in beta-D-mannosides.. Its pathway is glycan metabolism; N-glycan degradation. Functionally, exoglycosidase that cleaves the single beta-linked mannose residue from the non-reducing end of beta-mannosidic oligosaccharides of various complexity and length. Prefers mannobiose over mannotriose and has no activity against polymeric mannan. Is also severely restricted by galactosyl substitutions at the +1 subsite. Releases the terminal mannose residue from mannobiose, mannotriose and galactosyl-mannotriose (GM3), but not from galactosyl-mannobiose (GM2) or di-galactosyl-mannopentaose (G2M5). This chain is Beta-mannosidase B (mndB), found in Emericella nidulans (strain FGSC A4 / ATCC 38163 / CBS 112.46 / NRRL 194 / M139) (Aspergillus nidulans).